Reading from the N-terminus, the 350-residue chain is DNA primase small subunit PriS (350 aa).

Active-site residues include Asp97, Asp99, and Asp251.

This sequence belongs to the eukaryotic-type primase small subunit family. In terms of assembly, heterodimer of a small subunit (PriS) and a large subunit (PriL). It depends on Mg(2+) as a cofactor. Requires Mn(2+) as cofactor. The cofactor is Zn(2+).

In terms of biological role, catalytic subunit of DNA primase, an RNA polymerase that catalyzes the synthesis of short RNA molecules used as primers for DNA polymerase during DNA replication. The small subunit contains the primase catalytic core and has DNA synthesis activity on its own. Binding to the large subunit stabilizes and modulates the activity, increasing the rate of DNA synthesis while decreasing the length of the DNA fragments, and conferring RNA synthesis capability. The DNA polymerase activity may enable DNA primase to also catalyze primer extension after primer synthesis. May also play a role in DNA repair. The polypeptide is DNA primase small subunit PriS (Methanocaldococcus jannaschii (strain ATCC 43067 / DSM 2661 / JAL-1 / JCM 10045 / NBRC 100440) (Methanococcus jannaschii)).